The following is a 457-amino-acid chain: tRNA-2-methylthio-N(6)-dimethylallyladenosine synthase (457 aa).

The MTTase N-terminal domain maps to 2-119 (KKVFIKTFGC…LPELIDARRR (118 aa)). [4Fe-4S] cluster is bound by residues Cys11, Cys48, Cys82, Cys156, Cys160, and Cys163. The 234-residue stretch at 142–375 (RVEGPSAFVS…QATIDANMAR (234 aa)) folds into the Radical SAM core domain. Residues 378–448 (EGMVGSVQRI…PHSLRGDVVE (71 aa)) form the TRAM domain.

It belongs to the methylthiotransferase family. MiaB subfamily. As to quaternary structure, monomer. The cofactor is [4Fe-4S] cluster.

The protein resides in the cytoplasm. It carries out the reaction N(6)-dimethylallyladenosine(37) in tRNA + (sulfur carrier)-SH + AH2 + 2 S-adenosyl-L-methionine = 2-methylsulfanyl-N(6)-dimethylallyladenosine(37) in tRNA + (sulfur carrier)-H + 5'-deoxyadenosine + L-methionine + A + S-adenosyl-L-homocysteine + 2 H(+). Functionally, catalyzes the methylthiolation of N6-(dimethylallyl)adenosine (i(6)A), leading to the formation of 2-methylthio-N6-(dimethylallyl)adenosine (ms(2)i(6)A) at position 37 in tRNAs that read codons beginning with uridine. The sequence is that of tRNA-2-methylthio-N(6)-dimethylallyladenosine synthase from Ralstonia nicotianae (strain ATCC BAA-1114 / GMI1000) (Ralstonia solanacearum).